The sequence spans 415 residues: Esterase FrsA (415 aa).

This sequence belongs to the FrsA family. As to quaternary structure, monomer in solution. Homodimer. Forms a 1:1 complex with the unphosphorylated form of the EIIA component of the glucose-specific PTS system (IIAGlc).

It catalyses the reaction a carboxylic ester + H2O = an alcohol + a carboxylate + H(+). Its function is as follows. Catalyzes the hydrolysis of esters. In vitro, prefers short chain alkanoate ester as substrate. Displays highest activity towards p-nitrophenyl acetate (pNPA). Has weaker activity towards p-nitrophenyl butyrate (pNPB). The protein is Esterase FrsA of Vibrio vulnificus (strain CMCP6).